The chain runs to 616 residues: Chaperone protein HscA (616 aa).

This sequence belongs to the heat shock protein 70 family.

In terms of biological role, chaperone involved in the maturation of iron-sulfur cluster-containing proteins. Has a low intrinsic ATPase activity which is markedly stimulated by HscB. Involved in the maturation of IscU. This chain is Chaperone protein HscA, found in Photorhabdus laumondii subsp. laumondii (strain DSM 15139 / CIP 105565 / TT01) (Photorhabdus luminescens subsp. laumondii).